A 1409-amino-acid chain; its full sequence is Inositol hexakisphosphate and diphosphoinositol-pentakisphosphate kinase 1 (1409 aa).

64–65 (KK) contributes to the substrate binding site. Residues Arg-145, Lys-198, His-205, Arg-224, 248-251 (EEFM), and 257-259 (DVK) contribute to the ATP site. 224 to 225 (RK) is a substrate binding site. Substrate contacts are provided by Lys-259 and Arg-273. Residues Ser-275, Asp-320, and 332–334 (DVN) contribute to the ATP site. 337-340 (SFVK) is a binding site for substrate. The polyphosphoinositide-binding domain stretch occupies residues 382–453 (PTTSGTMMEL…VLDITRLLLA (72 aa)). Residues 891–996 (GVEEEGSAPA…PTEMKQSGLG (106 aa)) are disordered. 2 positions are modified to phosphoserine: Ser-920 and Ser-963. Polar residues predominate over residues 981 to 996 (FSSSRPPTEMKQSGLG). Residues Ser-1013 and Ser-1049 each carry the phosphoserine modification. Over residues 1110–1119 (MHSSQASDNP) the composition is skewed to polar residues. Positions 1110-1183 (MHSSQASDNP…PSLNSHVAEE (74 aa)) are disordered. Ser-1121 and Ser-1128 each carry phosphoserine. A compositionally biased stretch (low complexity) spans 1144–1162 (SSGPSSTVSSAGPSSPTTV). Polar residues predominate over residues 1163 to 1178 (DGNSQFGFSDQPSLNS).

It belongs to the histidine acid phosphatase family. VIP1 subfamily.

It is found in the cytoplasm. It localises to the cytosol. Its subcellular location is the cell membrane. It carries out the reaction 1D-myo-inositol hexakisphosphate + ATP = 1-diphospho-1D-myo-inositol 2,3,4,5,6-pentakisphosphate + ADP. The enzyme catalyses 5-diphospho-1D-myo-inositol 1,2,3,4,6-pentakisphosphate + ATP + H(+) = 1,5-bis(diphospho)-1D-myo-inositol 2,3,4,6-tetrakisphosphate + ADP. Its function is as follows. Bifunctional inositol kinase that acts in concert with the IP6K kinases IP6K1, IP6K2 and IP6K3 to synthesize the diphosphate group-containing inositol pyrophosphates diphosphoinositol pentakisphosphate, PP-InsP5, and bis-diphosphoinositol tetrakisphosphate, (PP)2-InsP4. PP-InsP5 and (PP)2-InsP4, also respectively called InsP7 and InsP8, regulate a variety of cellular processes, including apoptosis, vesicle trafficking, cytoskeletal dynamics, exocytosis, insulin signaling and neutrophil activation. Phosphorylates inositol hexakisphosphate (InsP6) at position 1 to produce PP-InsP5 which is in turn phosphorylated by IP6Ks to produce (PP)2-InsP4. Alternatively, phosphorylates PP-InsP5 at position 1, produced by IP6Ks from InsP6, to produce (PP)2-InsP4. Activated when cells are exposed to hyperosmotic stress. This chain is Inositol hexakisphosphate and diphosphoinositol-pentakisphosphate kinase 1, found in Pongo abelii (Sumatran orangutan).